Reading from the N-terminus, the 2410-residue chain is Reducing polyketide synthase FUB1 (2410 aa).

A compositionally biased stretch (low complexity) spans 1-42 (MTLSNGSNGANGTSNGNGAHPSANGFHNAANGGANNGSANGG). The segment at 1-52 (MTLSNGSNGANGTSNGNGAHPSANGFHNAANGGANNGSANGGAEHDAGRPQV) is disordered. Positions 57–479 (SSAIAVIGVS…GANAHAVLDD (423 aa)) constitute a Ketosynthase family 3 (KS3) domain. Active-site for beta-ketoacyl synthase activity residues include Cys230, His365, and His403. The interval 608 to 929 (TFIFTGQGAQ…FSAIKRKQDA (322 aa)) is malonyl-CoA:ACP transacylase (MAT) domain. Catalysis depends on Ser699, which acts as the For malonyltransferase activity. An N-terminal hotdog fold region spans residues 994–1127 (LELLGVRDPR…GLVSTSYKHD (134 aa)). The 314-residue stretch at 994–1307 (LELLGVRDPR…TVPLRGASDS (314 aa)) folds into the PKS/mFAS DH domain. The tract at residues 995 to 1302 (ELLGVRDPRS…LKGCKTVPLR (308 aa)) is dehydratase (DH) domain. His1026 functions as the Proton acceptor; for dehydratase activity in the catalytic mechanism. The C-terminal hotdog fold stretch occupies residues 1155-1307 (LPSVDPTVFY…TVPLRGASDS (153 aa)). The Proton donor; for dehydratase activity role is filled by Asp1220. The interval 1714–2026 (GLLDTLEYLS…SGGHVGKIVL (313 aa)) is enoyl reductase (ER) domain. A ketoreductase (KR) domain region spans residues 2050-2226 (ATYVLIGGLG…AATSINLSLV (177 aa)). Positions 2329 to 2406 (EVYEIVLQQL…GFTKKVMAKS (78 aa)) constitute a Carrier domain. Residue Ser2366 is modified to O-(pantetheine 4'-phosphoryl)serine.

It functions in the pathway mycotoxin biosynthesis. In terms of biological role, reducing polyketide synthase; part of the gene cluster that mediates the biosynthesis of fusaric acid, a mycotoxin with low to moderate toxicity to animals and humans, but with high phytotoxic properties. L-aspartate is suggested as fusaric acid amino acid precursor that is activated and further processed to O-acetyl-L-homoserine by cluster enzymes aspartate kinase FUB3 and homoserine O-acetyltransferase FUB5, as well as enzymes of the primary metabolism. The polyketide synthase (PKS) FUB1 generates the triketide trans-2-hexenal which is presumptively released by the hydrolase FUB4 and linked to the NRPS-bound amino acid precursor by NAD(P)-dependent dehydrogenase FUB6. FUB1, FUB4, and the non-canonical NRPS Fub8 may form an enzyme complex. Further processing of the NRPS-bound intermediate might be carried out by FUB6 and the sulfhydrylase FUB7, enabling a spontaneous electrocyclization to close the carbon backbone of fusaric acid. Dihydrofusaric acid is likely to be released via reduction by the thioester reductase (TR) domain of FUB8 whereupon the final oxidation to fusaric acid may (also) be performed by the FMN-dependent dehydrogenase FUB9. This chain is Reducing polyketide synthase FUB1, found in Gibberella fujikuroi (strain CBS 195.34 / IMI 58289 / NRRL A-6831) (Bakanae and foot rot disease fungus).